Here is a 1165-residue protein sequence, read N- to C-terminus: DNA-directed RNA polymerase subunit beta' (1165 aa).

Zn(2+) contacts are provided by Cys60, Cys62, Cys75, and Cys78. Positions 449, 451, and 453 each coordinate Mg(2+). 4 residues coordinate Zn(2+): Cys794, Cys868, Cys875, and Cys878.

The protein belongs to the RNA polymerase beta' chain family. The RNAP catalytic core consists of 2 alpha, 1 beta, 1 beta' and 1 omega subunit. When a sigma factor is associated with the core the holoenzyme is formed, which can initiate transcription. Mg(2+) serves as cofactor. Requires Zn(2+) as cofactor.

The enzyme catalyses RNA(n) + a ribonucleoside 5'-triphosphate = RNA(n+1) + diphosphate. In terms of biological role, DNA-dependent RNA polymerase catalyzes the transcription of DNA into RNA using the four ribonucleoside triphosphates as substrates. The polypeptide is DNA-directed RNA polymerase subunit beta' (Acetivibrio thermocellus (strain ATCC 27405 / DSM 1237 / JCM 9322 / NBRC 103400 / NCIMB 10682 / NRRL B-4536 / VPI 7372) (Clostridium thermocellum)).